The sequence spans 211 residues: Leucyl/phenylalanyl-tRNA--protein transferase (211 aa).

The protein belongs to the L/F-transferase family.

Its subcellular location is the cytoplasm. It catalyses the reaction N-terminal L-lysyl-[protein] + L-leucyl-tRNA(Leu) = N-terminal L-leucyl-L-lysyl-[protein] + tRNA(Leu) + H(+). The catalysed reaction is N-terminal L-arginyl-[protein] + L-leucyl-tRNA(Leu) = N-terminal L-leucyl-L-arginyl-[protein] + tRNA(Leu) + H(+). The enzyme catalyses L-phenylalanyl-tRNA(Phe) + an N-terminal L-alpha-aminoacyl-[protein] = an N-terminal L-phenylalanyl-L-alpha-aminoacyl-[protein] + tRNA(Phe). Functions in the N-end rule pathway of protein degradation where it conjugates Leu, Phe and, less efficiently, Met from aminoacyl-tRNAs to the N-termini of proteins containing an N-terminal arginine or lysine. The chain is Leucyl/phenylalanyl-tRNA--protein transferase from Flavobacterium psychrophilum (strain ATCC 49511 / DSM 21280 / CIP 103535 / JIP02/86).